The primary structure comprises 196 residues: Holliday junction branch migration complex subunit RuvA (196 aa).

Residues M1–A63 are domain I. Residues D64–A142 are domain II. Positions V143–P151 are flexible linker. Positions P151 to K196 are domain III.

This sequence belongs to the RuvA family. In terms of assembly, homotetramer. Forms an RuvA(8)-RuvB(12)-Holliday junction (HJ) complex. HJ DNA is sandwiched between 2 RuvA tetramers; dsDNA enters through RuvA and exits via RuvB. An RuvB hexamer assembles on each DNA strand where it exits the tetramer. Each RuvB hexamer is contacted by two RuvA subunits (via domain III) on 2 adjacent RuvB subunits; this complex drives branch migration. In the full resolvosome a probable DNA-RuvA(4)-RuvB(12)-RuvC(2) complex forms which resolves the HJ.

The protein resides in the cytoplasm. The RuvA-RuvB-RuvC complex processes Holliday junction (HJ) DNA during genetic recombination and DNA repair, while the RuvA-RuvB complex plays an important role in the rescue of blocked DNA replication forks via replication fork reversal (RFR). RuvA specifically binds to HJ cruciform DNA, conferring on it an open structure. The RuvB hexamer acts as an ATP-dependent pump, pulling dsDNA into and through the RuvAB complex. HJ branch migration allows RuvC to scan DNA until it finds its consensus sequence, where it cleaves and resolves the cruciform DNA. This is Holliday junction branch migration complex subunit RuvA from Mycobacterium sp. (strain JLS).